The chain runs to 212 residues: Methylthioribulose-1-phosphate dehydratase (212 aa).

Positions 97 and 99 each coordinate Zn(2+).

Belongs to the aldolase class II family. MtnB subfamily. As to quaternary structure, homotetramer. Zn(2+) is required as a cofactor.

The enzyme catalyses 5-(methylsulfanyl)-D-ribulose 1-phosphate = 5-methylsulfanyl-2,3-dioxopentyl phosphate + H2O. It functions in the pathway amino-acid biosynthesis; L-methionine biosynthesis via salvage pathway; L-methionine from S-methyl-5-thio-alpha-D-ribose 1-phosphate: step 2/6. Its function is as follows. Catalyzes the dehydration of methylthioribulose-1-phosphate (MTRu-1-P) into 2,3-diketo-5-methylthiopentyl-1-phosphate (DK-MTP-1-P). This Bacillus thuringiensis subsp. konkukian (strain 97-27) protein is Methylthioribulose-1-phosphate dehydratase.